The chain runs to 1072 residues: DNA-directed RNA polymerase subunit beta (1072 aa).

The protein belongs to the RNA polymerase beta chain family. In terms of assembly, in plastids the minimal PEP RNA polymerase catalytic core is composed of four subunits: alpha, beta, beta', and beta''. When a (nuclear-encoded) sigma factor is associated with the core the holoenzyme is formed, which can initiate transcription.

The protein localises to the plastid. Its subcellular location is the chloroplast. The catalysed reaction is RNA(n) + a ribonucleoside 5'-triphosphate = RNA(n+1) + diphosphate. Functionally, DNA-dependent RNA polymerase catalyzes the transcription of DNA into RNA using the four ribonucleoside triphosphates as substrates. In Arabidopsis thaliana (Mouse-ear cress), this protein is DNA-directed RNA polymerase subunit beta.